A 458-amino-acid chain; its full sequence is MSTGTVVQVIGAVVDVEFPHDAVPQVYDALEIKSEGLVLEVQQQLGGGVVRTIAMGSSDGLRRGLEVVNSGSPITVPVGSATLGRIMNVLGEPVDEAGPIGEEDRYVIHREAPSYEDQSNTTELLETGIKVIDLVCPFAKGGKVGLFGGAGVGKTVNMMELINNIAKAHSGLSVFAGVGERTREGNDFYYEMEDSGVLDKVAMVYGQMNEPPGNRLRVALTGLTMAEKFRDEGKDVLFFVDNIYRYTLAGTEVSALLGRMPSAVGYQPTLAEEMGVLQERITSTKTGSITSVQAVYVPADDLTDPSPATTFAHLDATVVLSRNIASLGIYPAVDPLDSTSRQLDPQVVGQEHYDVANGVQTVLQRYKELKDIIAILGMDELSDEDKTTVFRARKIEKYLSQPFFVAEVFTGSPGKYVSLKDTIRGFKGILEGEFDHLPEQAFYMVGSIDEAVEKANKK.

148-155 is an ATP binding site; it reads GGAGVGKT.

It belongs to the ATPase alpha/beta chains family. In terms of assembly, F-type ATPases have 2 components, CF(1) - the catalytic core - and CF(0) - the membrane proton channel. CF(1) has five subunits: alpha(3), beta(3), gamma(1), delta(1), epsilon(1). CF(0) has three main subunits: a(1), b(2) and c(9-12). The alpha and beta chains form an alternating ring which encloses part of the gamma chain. CF(1) is attached to CF(0) by a central stalk formed by the gamma and epsilon chains, while a peripheral stalk is formed by the delta and b chains.

Its subcellular location is the cell inner membrane. It catalyses the reaction ATP + H2O + 4 H(+)(in) = ADP + phosphate + 5 H(+)(out). Its function is as follows. Produces ATP from ADP in the presence of a proton gradient across the membrane. The catalytic sites are hosted primarily by the beta subunits. The protein is ATP synthase subunit beta of Shewanella pealeana (strain ATCC 700345 / ANG-SQ1).